The primary structure comprises 322 residues: MVKLAITLGDPSGINSEILLKALNKLPKRNISYVIYGSKKALEKAKKLTGVDLNIKEIKSINDVVKSGIYLINLYDLDVEFGSSSKETGKASVVYLENAVKDVLEKKADALITLPISKQWIMESGFPYAGHTDYLAEVSGAKEYAMVLMCKKLKVALITTHIPLKDVPSQITKEKIISKVRLINREFKEKFGISKPKIAILGLNPHASDNGNIGNEEQNIILPAVKTLREDGIEITDPLSPDTAFNRYKDFDIYVAMYHDQGLIPLKLLCFRKAVNITLGLPFIRTSPDHGTGYDIAGKNIADPSSTIEAVELAILLKRVRK.

Positions 131 and 132 each coordinate substrate. A divalent metal cation is bound by residues histidine 161, histidine 206, and histidine 259. Substrate contacts are provided by lysine 267, asparagine 276, and arginine 285.

The protein belongs to the PdxA family. Homodimer. A divalent metal cation serves as cofactor.

It localises to the cytoplasm. It carries out the reaction 4-(phosphooxy)-L-threonine + NAD(+) = 3-amino-2-oxopropyl phosphate + CO2 + NADH. The protein operates within cofactor biosynthesis; pyridoxine 5'-phosphate biosynthesis; pyridoxine 5'-phosphate from D-erythrose 4-phosphate: step 4/5. Catalyzes the NAD(P)-dependent oxidation of 4-(phosphooxy)-L-threonine (HTP) into 2-amino-3-oxo-4-(phosphooxy)butyric acid which spontaneously decarboxylates to form 3-amino-2-oxopropyl phosphate (AHAP). The sequence is that of 4-hydroxythreonine-4-phosphate dehydrogenase from Sulfurihydrogenibium sp. (strain YO3AOP1).